The following is a 600-amino-acid chain: 69 kDa paraflagellar rod protein (600 aa).

The interval 335 to 355 is calmodulin-binding; it reads DKQDEAWRRIQELERVLQRLG.

Heterodimer of a 69 kDa and a 73 kDa protein.

The protein resides in the cell projection. Its subcellular location is the cilium. It is found in the flagellum. It localises to the cytoplasm. The protein localises to the cytoskeleton. Major component of the paraflagellar rod (PFR). The PFR is a highly ordered lattices of fibrous proteins that are located inside the flagellum and assume a fixed orientation with respect to the microtubular axoneme. The protein is 69 kDa paraflagellar rod protein (PFRA) of Trypanosoma brucei brucei.